We begin with the raw amino-acid sequence, 81 residues long: Translational regulator CsrA (81 aa).

This sequence belongs to the CsrA/RsmA family. Homodimer; the beta-strands of each monomer intercalate to form a hydrophobic core, while the alpha-helices form wings that extend away from the core.

The protein resides in the cytoplasm. Its function is as follows. A translational regulator that binds mRNA to regulate translation initiation and/or mRNA stability. Usually binds in the 5'-UTR at or near the Shine-Dalgarno sequence preventing ribosome-binding, thus repressing translation. Its main target seems to be the major flagellin gene, while its function is anatagonized by FliW. The sequence is that of Translational regulator CsrA from Halothermothrix orenii (strain H 168 / OCM 544 / DSM 9562).